A 98-amino-acid chain; its full sequence is Cell cycle protein GpsB (98 aa).

Residues 34–72 (LDMVIKDYEAFHQEIEELQQENLQLKKQLEEANKRQPAQ) adopt a coiled-coil conformation.

The protein belongs to the GpsB family. As to quaternary structure, forms polymers through the coiled coil domains. Interacts with PBP1, MreC and EzrA.

Its subcellular location is the cytoplasm. Functionally, divisome component that associates with the complex late in its assembly, after the Z-ring is formed, and is dependent on DivIC and PBP2B for its recruitment to the divisome. Together with EzrA, is a key component of the system that regulates PBP1 localization during cell cycle progression. Its main role could be the removal of PBP1 from the cell pole after pole maturation is completed. Also contributes to the recruitment of PBP1 to the division complex. Not essential for septum formation. This Bacillus licheniformis (strain ATCC 14580 / DSM 13 / JCM 2505 / CCUG 7422 / NBRC 12200 / NCIMB 9375 / NCTC 10341 / NRRL NRS-1264 / Gibson 46) protein is Cell cycle protein GpsB.